The primary structure comprises 403 residues: MSKFNRMHLIVLDSVGIGAAPDANNFVNAGVPDGASDTLGHISKTVGLNVPNMAKLGLGNIPREQPLKTVPAESNPTGYATKLEEVSLGKDTMTGHWEIMGLNITEPFDTFWNGFPEEILTQIEEFSGRKVIRESNRPYSGTAVIDDFGPRQMETGELIIYTSADPVLQIAAHEDIIPVEELYRICEFARSITLERPALLGRIIARPYVGEPGNFTRTSNRRDLAISPFAPTVLDKLNEAGIDTYSVGKISDIFNGEGINHDMGHNKSNNHGVDNLIKAMTSEDFKHGFSFTNLVDFDALYGHRRNPQGYRDCLHEFDERLPEIIAAMKEDDLLMITADHGNDPTYAGTDHTREYIPFLAYSPSFKCSGLIPVGHFADISATIADNFGVEKAMIGESFLDKLV.

Residues Asp-13, Asp-298, His-303, Asp-339, His-340, and His-351 each coordinate Mn(2+).

Belongs to the phosphopentomutase family. It depends on Mn(2+) as a cofactor.

Its subcellular location is the cytoplasm. The catalysed reaction is 2-deoxy-alpha-D-ribose 1-phosphate = 2-deoxy-D-ribose 5-phosphate. The enzyme catalyses alpha-D-ribose 1-phosphate = D-ribose 5-phosphate. It functions in the pathway carbohydrate degradation; 2-deoxy-D-ribose 1-phosphate degradation; D-glyceraldehyde 3-phosphate and acetaldehyde from 2-deoxy-alpha-D-ribose 1-phosphate: step 1/2. In terms of biological role, isomerase that catalyzes the conversion of deoxy-ribose 1-phosphate (dRib-1-P) and ribose 1-phosphate (Rib-1-P) to deoxy-ribose 5-phosphate (dRib-5-P) and ribose 5-phosphate (Rib-5-P), respectively. This Streptococcus thermophilus (strain ATCC BAA-491 / LMD-9) protein is Phosphopentomutase.